The primary structure comprises 120 residues: U-scoloptoxin(20)-Cw1a (120 aa).

Positions 1–26 (MNSTDRLLGVLLAVVALILLIRISEA) are cleaved as a signal peptide. The disordered stretch occupies residues 87-106 (SSGKSLTTTKDSSESRKKEI). Over residues 97 to 106 (DSSESRKKEI) the composition is skewed to basic and acidic residues.

It belongs to the scoloptoxin-20 family. Contains 3 disulfide bonds. Expressed by the venom gland.

The protein localises to the secreted. This chain is U-scoloptoxin(20)-Cw1a, found in Cormocephalus westwoodi (Westwood's green centipede).